The chain runs to 242 residues: 4-hydroxy-tetrahydrodipicolinate reductase (242 aa).

Residues 8–13 (GAKGRM), 75–77 (GTT), and 99–102 (ATNM) each bind NAD(+). H131 acts as the Proton donor/acceptor in catalysis. H132 is a (S)-2,3,4,5-tetrahydrodipicolinate binding site. The active-site Proton donor is the K135. Residue 141–142 (GT) coordinates (S)-2,3,4,5-tetrahydrodipicolinate.

The protein belongs to the DapB family.

The protein resides in the cytoplasm. It carries out the reaction (S)-2,3,4,5-tetrahydrodipicolinate + NAD(+) + H2O = (2S,4S)-4-hydroxy-2,3,4,5-tetrahydrodipicolinate + NADH + H(+). The catalysed reaction is (S)-2,3,4,5-tetrahydrodipicolinate + NADP(+) + H2O = (2S,4S)-4-hydroxy-2,3,4,5-tetrahydrodipicolinate + NADPH + H(+). It functions in the pathway amino-acid biosynthesis; L-lysine biosynthesis via DAP pathway; (S)-tetrahydrodipicolinate from L-aspartate: step 4/4. Its function is as follows. Catalyzes the conversion of 4-hydroxy-tetrahydrodipicolinate (HTPA) to tetrahydrodipicolinate. This chain is 4-hydroxy-tetrahydrodipicolinate reductase, found in Campylobacter jejuni subsp. jejuni serotype O:2 (strain ATCC 700819 / NCTC 11168).